A 1479-amino-acid chain; its full sequence is Type VII secretion system protein EssC (1479 aa).

The Cytoplasmic segment spans residues 1-229 (MHKLIIKYNK…RPPQPIQKNN (229 aa)). The chain crosses the membrane as a helical span at residues 230-252 (TVIWRSIIPPLVMIALTVVIFLV). At 253–256 (RPIG) the chain is on the extracellular side. The chain crosses the membrane as a helical span at residues 257-279 (IYILMMIGMSSVTIVFGITTYFS). Residues 280–1479 (EKKKYNKDVE…QAYQKIRWFK (1200 aa)) lie on the Cytoplasmic side of the membrane. FtsK domains lie at 652–846 (DDIL…QDSN) and 997–1183 (QGPM…SEVS). ATP is bound by residues 672-679 (GTTGSGKS) and 1014-1021 (GSPGYGRT).

Belongs to the EssC family. As to quaternary structure, homooligomer. Interacts with EsaE.

It is found in the cell membrane. Its function is as follows. Component of the type VII secretion system (Ess). Required for the secretion of substrates including EsxA and EsxB. However, unable to support secretion of the substrate protein EsxC. This Staphylococcus aureus (strain MSSA476) protein is Type VII secretion system protein EssC.